Reading from the N-terminus, the 230-residue chain is Oxaloacetate tautomerase FAHD1, mitochondrial (230 aa).

A mitochondrion-targeting transit peptide spans 1 to 26; sequence MAAAAAAAAQRLLAASTKIIGVGRNY. Mg(2+) is bound by residues Glu-73, Glu-75, and Asp-104.

It belongs to the FAH family. Mg(2+) serves as cofactor. It depends on Mn(2+) as a cofactor.

Its subcellular location is the mitochondrion. It carries out the reaction oxaloacetate = enol-oxaloacetate. In terms of biological role, tautomerase that converts enol-oxaloacetate, a strong inhibitor of succinate dehydrogenase, to the physiological keto form of oxaloacetate. This is Oxaloacetate tautomerase FAHD1, mitochondrial from Oryza sativa subsp. japonica (Rice).